The primary structure comprises 346 residues: Cyclin-dependent kinase 20 (346 aa).

The region spanning 4-288 is the Protein kinase domain; sequence YCILGRIGEG…ASKALLHQYF (285 aa). ATP is bound by residues 10 to 18 and Lys-33; that span reads IGEGAHGIV. Asp-127 (proton acceptor) is an active-site residue.

It belongs to the protein kinase superfamily. CMGC Ser/Thr protein kinase family. CDC2/CDKX subfamily. In terms of assembly, monomer. Interacts with TBC1D32. Interacts with MAK.

It localises to the nucleus. It is found in the cytoplasm. The protein localises to the cell projection. The protein resides in the cilium. It catalyses the reaction L-seryl-[protein] + ATP = O-phospho-L-seryl-[protein] + ADP + H(+). The enzyme catalyses L-threonyl-[protein] + ATP = O-phospho-L-threonyl-[protein] + ADP + H(+). Required for high-level Shh responses in the developing neural tube. Together with TBC1D32, controls the structure of the primary cilium by coordinating assembly of the ciliary membrane and axoneme, allowing GLI2 to be properly activated in response to SHH signaling. Involved in cell growth. Activates CDK2, a kinase involved in the control of the cell cycle, by phosphorylating residue 'Thr-160'. The chain is Cyclin-dependent kinase 20 (CDK20) from Homo sapiens (Human).